The chain runs to 145 residues: Large ribosomal subunit protein eL32 (145 aa).

This sequence belongs to the eukaryotic ribosomal protein eL32 family.

This chain is Large ribosomal subunit protein eL32 (rpl32e), found in Aeropyrum pernix (strain ATCC 700893 / DSM 11879 / JCM 9820 / NBRC 100138 / K1).